A 236-amino-acid chain; its full sequence is 2-C-methyl-D-erythritol 4-phosphate cytidylyltransferase (236 aa).

Belongs to the IspD/TarI cytidylyltransferase family. IspD subfamily.

It carries out the reaction 2-C-methyl-D-erythritol 4-phosphate + CTP + H(+) = 4-CDP-2-C-methyl-D-erythritol + diphosphate. It functions in the pathway isoprenoid biosynthesis; isopentenyl diphosphate biosynthesis via DXP pathway; isopentenyl diphosphate from 1-deoxy-D-xylulose 5-phosphate: step 2/6. In terms of biological role, catalyzes the formation of 4-diphosphocytidyl-2-C-methyl-D-erythritol from CTP and 2-C-methyl-D-erythritol 4-phosphate (MEP). In Paraburkholderia phymatum (strain DSM 17167 / CIP 108236 / LMG 21445 / STM815) (Burkholderia phymatum), this protein is 2-C-methyl-D-erythritol 4-phosphate cytidylyltransferase.